The sequence spans 490 residues: Glutamyl-tRNA(Gln) amidotransferase subunit A (490 aa).

Catalysis depends on charge relay system residues Lys78 and Ser158. Ser182 (acyl-ester intermediate) is an active-site residue.

This sequence belongs to the amidase family. GatA subfamily. As to quaternary structure, heterotrimer of A, B and C subunits.

The catalysed reaction is L-glutamyl-tRNA(Gln) + L-glutamine + ATP + H2O = L-glutaminyl-tRNA(Gln) + L-glutamate + ADP + phosphate + H(+). Allows the formation of correctly charged Gln-tRNA(Gln) through the transamidation of misacylated Glu-tRNA(Gln) in organisms which lack glutaminyl-tRNA synthetase. The reaction takes place in the presence of glutamine and ATP through an activated gamma-phospho-Glu-tRNA(Gln). This chain is Glutamyl-tRNA(Gln) amidotransferase subunit A, found in Caulobacter sp. (strain K31).